The primary structure comprises 341 residues: L-threonine 3-dehydrogenase (341 aa).

Zn(2+) is bound at residue cysteine 38. Residues threonine 40 and histidine 43 each act as charge relay system in the active site. Zn(2+)-binding residues include histidine 63, glutamate 64, cysteine 93, cysteine 96, cysteine 99, and cysteine 107. NAD(+)-binding positions include isoleucine 175, aspartate 195, arginine 200, 262 to 264 (LGI), and 286 to 287 (IY).

Belongs to the zinc-containing alcohol dehydrogenase family. In terms of assembly, homotetramer. Requires Zn(2+) as cofactor.

It localises to the cytoplasm. It carries out the reaction L-threonine + NAD(+) = (2S)-2-amino-3-oxobutanoate + NADH + H(+). Its pathway is amino-acid degradation; L-threonine degradation via oxydo-reductase pathway; glycine from L-threonine: step 1/2. Functionally, catalyzes the NAD(+)-dependent oxidation of L-threonine to 2-amino-3-ketobutyrate. In Pseudoalteromonas translucida (strain TAC 125), this protein is L-threonine 3-dehydrogenase.